The following is a 73-amino-acid chain: Omega-conotoxin CVID (73 aa).

Residues 1 to 22 (MKLTCVVIVAVLLLTACQLITA) form the signal peptide. Positions 23–45 (DDSRGTQKHRALRSDTKLSMSTR) are excised as a propeptide. Intrachain disulfides connect C46–C61, C53–C65, and C60–C72. C72 is subject to Cysteine amide.

The protein belongs to the conotoxin O1 superfamily. Expressed by the venom duct.

It localises to the secreted. Its function is as follows. Omega-conotoxins act at presynaptic membranes, they bind and block voltage-gated calcium channels. This toxin inhibits neurotransmitter release, it blocks N-type calcium channels, probably a N-type (Cav2.2/CACNA1B) calcium channel variant. The sequence is that of Omega-conotoxin CVID from Conus catus (Cat cone).